Here is a 651-residue protein sequence, read N- to C-terminus: Zinc metalloproteinase nas-32 (651 aa).

Positions 1–21 are cleaved as a signal peptide; the sequence is MRRFFICYIGFLSIFLDFILA. Residues 22 to 202 constitute a propeptide that is removed on maturation; that stretch reads DKDNNSEEER…EQSSKSRRKK (181 aa). N25, N72, and N251 each carry an N-linked (GlcNAc...) asparagine glycan. One can recognise a Peptidase M12A domain in the interval 203-394; that stretch reads RQIDNLAQFW…KMLNTHYSCS (192 aa). Cystine bridges form between C245–C393, C264–C283, C395–C412, C415–C426, C434–C467, and C495–C516. H291 lines the Zn(2+) pocket. The active site involves E292. Zn(2+)-binding residues include H295 and H301. The EGF-like domain occupies 380-433; the sequence is TFLDLKMLNTHYSCSCPTILSCGNGGFTNPANCSVCICPYGFGGALCTERTDYG. Residue N411 is glycosylated (N-linked (GlcNAc...) asparagine). Positions 434 to 554 constitute a CUB domain; that stretch reads CGSTLTATDT…TTYTWSYRYV (121 aa). A glycan (N-linked (GlcNAc...) asparagine) is linked at N453. Residue N557 is glycosylated (N-linked (GlcNAc...) asparagine). 3 cysteine pairs are disulfide-bonded: C610–C647, C619–C640, and C628–C644. One can recognise a ShKT domain in the interval 610–647; the sequence is CKDRFPKSQCSTYSTNGMCTQQPPLAAEFSCAETCGFC.

The cofactor is Zn(2+). As to expression, expressed in pharyngeal, anal depressor, intestinal and vulva muscles, head neurons and head mesodermal cell.

Its subcellular location is the secreted. Its function is as follows. Metalloprotease. This Caenorhabditis elegans protein is Zinc metalloproteinase nas-32 (nas-32).